Consider the following 461-residue polypeptide: Proline--tRNA ligase (461 aa).

This sequence belongs to the class-II aminoacyl-tRNA synthetase family. ProS type 3 subfamily. Homodimer.

The protein localises to the cytoplasm. The catalysed reaction is tRNA(Pro) + L-proline + ATP = L-prolyl-tRNA(Pro) + AMP + diphosphate. In terms of biological role, catalyzes the attachment of proline to tRNA(Pro) in a two-step reaction: proline is first activated by ATP to form Pro-AMP and then transferred to the acceptor end of tRNA(Pro). This chain is Proline--tRNA ligase, found in Methanococcus vannielii (strain ATCC 35089 / DSM 1224 / JCM 13029 / OCM 148 / SB).